A 206-amino-acid chain; its full sequence is Small ribosomal subunit protein uS4 (206 aa).

Residues 96-156 (SRLDNVVYRM…EKSRNQSRIA (61 aa)) form the S4 RNA-binding domain.

This sequence belongs to the universal ribosomal protein uS4 family. In terms of assembly, part of the 30S ribosomal subunit. Contacts protein S5. The interaction surface between S4 and S5 is involved in control of translational fidelity.

One of the primary rRNA binding proteins, it binds directly to 16S rRNA where it nucleates assembly of the body of the 30S subunit. Functionally, with S5 and S12 plays an important role in translational accuracy. The sequence is that of Small ribosomal subunit protein uS4 from Hydrogenovibrio crunogenus (strain DSM 25203 / XCL-2) (Thiomicrospira crunogena).